The following is a 129-amino-acid chain: Glycine cleavage system H protein (129 aa).

The 82-residue stretch at 23-104 (TATIGITQHA…AYAAWLFRLK (82 aa)) folds into the Lipoyl-binding domain. Lys-64 carries the post-translational modification N6-lipoyllysine.

This sequence belongs to the GcvH family. In terms of assembly, the glycine cleavage system is composed of four proteins: P, T, L and H. It depends on (R)-lipoate as a cofactor.

Its function is as follows. The glycine cleavage system catalyzes the degradation of glycine. The H protein shuttles the methylamine group of glycine from the P protein to the T protein. The protein is Glycine cleavage system H protein of Nitrosospira multiformis (strain ATCC 25196 / NCIMB 11849 / C 71).